The primary structure comprises 1771 residues: Atrochrysone carboxylic acid synthase (1771 aa).

The tract at residues 38-269 is N-terminal acylcarrier protein transacylase domain (SAT); sequence HLHSKDRRHH…SLPVFGGLCH (232 aa). One can recognise a Ketosynthase family 3 (KS3) domain in the interval 402–836; that stretch reads QSKIAIVGMS…GGNTSVVLEE (435 aa). Residues Cys575, His711, and His754 each act as for beta-ketoacyl synthase activity in the active site. Residues 937-1257 form a malonyl-CoA:ACP transacylase (MAT) domain region; that stretch reads FAFTGQGASY…LSSLHCAGVE (321 aa). The segment at 1322 to 1641 is product template (PT) domain; sequence TSTVQKIVEE…RLLLNRFFSP (320 aa). The interval 1326–1461 is N-terminal hotdog fold; it reads QKIVEESFDG…AKIYYCDASE (136 aa). A PKS/mFAS DH domain is found at 1326 to 1636; the sequence is QKIVEESFDG…FRRYPRLLLN (311 aa). The active-site Proton acceptor; for dehydratase activity is the His1358. Residues 1488–1636 are C-terminal hotdog fold; sequence IANRFSGRMA…FRRYPRLLLN (149 aa). Asp1547 (proton donor; for dehydratase activity) is an active-site residue. Positions 1668–1681 are enriched in low complexity; the sequence is AATSTTSTTSTAST. The interval 1668–1695 is disordered; it reads AATSTTSTTSTASTGQPPKVDETSPVDS. Positions 1693–1770 constitute a Carrier domain; it reads VDSNSTAARA…DLKSWLLEYY (78 aa). An O-(pantetheine 4'-phosphoryl)serine modification is found at Ser1730.

The enzyme catalyses holo-[ACP] + 8 malonyl-CoA + 8 H(+) = atrochrysone carboxyl-[ACP] + 8 CO2 + 8 CoA + 2 H2O. It functions in the pathway secondary metabolite biosynthesis. Non-reducing polyketide synthase; part of the gene cluster that mediates the biosynthesis of geodin, an intermediate in the biosynthesis of other natural products. The pathway begins with the synthesis of atrochrysone thioester by the polyketide synthase (PKS) gedC. The atrochrysone carboxyl ACP thioesterase gedB then breaks the thioester bond and releases the atrochrysone carboxylic acid from gedC. The atrochrysone carboxylic acid is then converted to atrochrysone which is further transformed into emodinanthrone. The next step is performed by the emodinanthrone oxygenase gedH that catalyzes the oxidation of emodinanthrone to emodin. Emodin O-methyltransferase encoded probably by gedA then catalyzes methylation of the 8-hydroxy group of emodin to form questin. Ring cleavage of questin by questin oxidase gedK leads to desmethylsulochrin via several intermediates including questin epoxide. Another methylation step probably catalyzed by methyltransferase gedG leads to the formation of sulochrin which is further converted to dihydrogeodin by the sulochrin halogenase gedL. Finally, the dihydrogeodin oxidase gedJ catalyzes the stereospecific phenol oxidative coupling reaction converting dihydrogeodin to geodin. The polypeptide is Atrochrysone carboxylic acid synthase (Aspergillus terreus (strain NIH 2624 / FGSC A1156)).